A 185-amino-acid chain; its full sequence is MVSKVALLLAVLVCSQYMAQGVYVVSKAEWGGRGAKWTVGLGNYLSYAIIHHTAGSYCETRAQCNAVLQSVQNYHMDSLGWPDIGYNFLIGGDGNVYEGRGWNNMGAHAAEWNPYSIGISFLGNYNWDTLEPNMISAAQQLLNDAVNRGQLSSGYILYGHRQVSATECPGTHIWNEIRGWSHWSG.

A signal peptide spans 1–21 (MVSKVALLLAVLVCSQYMAQG). One can recognise an N-acetylmuramoyl-L-alanine amidase domain in the interval 46–170 (SYAIIHHTAG…RQVSATECPG (125 aa)). Residue His51 coordinates Zn(2+). Residues Cys58 and Cys64 are joined by a disulfide bond. Zn(2+)-binding residues include His160 and Cys168.

It belongs to the N-acetylmuramoyl-L-alanine amidase 2 family. Zn(2+) is required as a cofactor.

It localises to the secreted. It carries out the reaction Hydrolyzes the link between N-acetylmuramoyl residues and L-amino acid residues in certain cell-wall glycopeptides.. Functionally, N-acetylmuramyl-L-alanine amidase involved in innate immunity by degrading bacterial peptidoglycans (PGN). Plays a scavenger role by digesting biologically active PGN into biologically inactive fragments. Has no direct bacteriolytic activity. The polypeptide is Peptidoglycan-recognition protein SC1a (Drosophila melanogaster (Fruit fly)).